Reading from the N-terminus, the 271-residue chain is tRNA pseudouridine synthase A (271 aa).

The Nucleophile role is filled by D56. Residue Y120 coordinates substrate.

It belongs to the tRNA pseudouridine synthase TruA family. Homodimer.

It carries out the reaction uridine(38/39/40) in tRNA = pseudouridine(38/39/40) in tRNA. Formation of pseudouridine at positions 38, 39 and 40 in the anticodon stem and loop of transfer RNAs. This is tRNA pseudouridine synthase A from Janthinobacterium sp. (strain Marseille) (Minibacterium massiliensis).